A 107-amino-acid chain; its full sequence is Biphenyl 2,3-dioxygenase, ferredoxin component (107 aa).

Positions 4–99 (TKICSSGDLA…VKLEGDDVLV (96 aa)) constitute a Rieske domain. Residues C43, H45, C62, and H65 each contribute to the [2Fe-2S] cluster site.

The protein belongs to the bacterial ring-hydroxylating dioxygenase ferredoxin component family. The multicomponent biphenyl dioxygenase system is composed of a ferredoxin reductase (BphA4), a ferredoxin (BphA3), and a terminal oxygenase (BphA1A2). It depends on [2Fe-2S] cluster as a cofactor.

The protein operates within xenobiotic degradation; biphenyl degradation. Functionally, ferredoxin component of the biphenyl dioxygenase system that catalyzes the stereospecific dihydroxylation of the aromatic ring of biphenyl, yielding a dihydrodiol compound. Is likely involved in biphenyl degradation that allows growth of Rhodococcus sp. strain RHA1 on biphenyl as the sole source of carbon and energy. The dioxygenase system can also use naphtalene and 4-chlorobiphenyl (4-CB) as substrates, as well as some polychlorinated biphenyls (PCB) such as 2,2'-dichlorobiphenyl, 2,3-dichlorobiphenyl and 2,5,2'-trichlorobiphenyl. It exhibits weak activity toward dibenzofuran and dibenzo-p-dioxin. Electrons are transferred from NADH to the [2Fe-2S] cluster in BphA1 via FAD of BphA4 and [2Fe-2S] cluster of BphA3. In Rhodococcus jostii (strain RHA1), this protein is Biphenyl 2,3-dioxygenase, ferredoxin component.